The following is a 339-amino-acid chain: Biotin synthase (339 aa).

The Radical SAM core domain maps to 55-282 (NAVQLSTLLS…KAVVRLSAGR (228 aa)). Residues Cys70, Cys74, and Cys77 each coordinate [4Fe-4S] cluster. Cys114, Cys145, Cys205, and Arg277 together coordinate [2Fe-2S] cluster.

The protein belongs to the radical SAM superfamily. Biotin synthase family. In terms of assembly, homodimer. [4Fe-4S] cluster is required as a cofactor. It depends on [2Fe-2S] cluster as a cofactor.

It catalyses the reaction (4R,5S)-dethiobiotin + (sulfur carrier)-SH + 2 reduced [2Fe-2S]-[ferredoxin] + 2 S-adenosyl-L-methionine = (sulfur carrier)-H + biotin + 2 5'-deoxyadenosine + 2 L-methionine + 2 oxidized [2Fe-2S]-[ferredoxin]. It participates in cofactor biosynthesis; biotin biosynthesis; biotin from 7,8-diaminononanoate: step 2/2. Functionally, catalyzes the conversion of dethiobiotin (DTB) to biotin by the insertion of a sulfur atom into dethiobiotin via a radical-based mechanism. This is Biotin synthase from Burkholderia orbicola (strain MC0-3).